The chain runs to 152 residues: Putative pre-16S rRNA nuclease (152 aa).

It belongs to the YqgF nuclease family.

The protein localises to the cytoplasm. Could be a nuclease involved in processing of the 5'-end of pre-16S rRNA. This is Putative pre-16S rRNA nuclease from Synechocystis sp. (strain ATCC 27184 / PCC 6803 / Kazusa).